Here is a 155-residue protein sequence, read N- to C-terminus: Small ribosomal subunit protein uS7c (155 aa).

Belongs to the universal ribosomal protein uS7 family. Part of the 30S ribosomal subunit.

The protein resides in the plastid. It is found in the chloroplast. Its function is as follows. One of the primary rRNA binding proteins, it binds directly to 16S rRNA where it nucleates assembly of the head domain of the 30S subunit. This Stewartia pseudocamellia (Japanese stewartia) protein is Small ribosomal subunit protein uS7c (rps7).